Consider the following 420-residue polypeptide: Histidine--tRNA ligase (420 aa).

It belongs to the class-II aminoacyl-tRNA synthetase family. In terms of assembly, homodimer.

Its subcellular location is the cytoplasm. The catalysed reaction is tRNA(His) + L-histidine + ATP = L-histidyl-tRNA(His) + AMP + diphosphate + H(+). The polypeptide is Histidine--tRNA ligase (Thermodesulfovibrio yellowstonii (strain ATCC 51303 / DSM 11347 / YP87)).